Consider the following 57-residue polypeptide: QDKIDPKMVQYQDSPKDGNKCSTCVNFEAPSSCKIVAGKISPNGWCIAYAPMEDKKG.

The [4Fe-4S] cluster site is built by Cys21, Cys24, Cys33, and Cys46.

This sequence belongs to the high-potential iron-sulfur protein (HiPIP) family. In terms of assembly, homodimer.

Functionally, specific class of high-redox-potential 4Fe-4S ferredoxins. Functions in anaerobic electron transport in most purple and in some other photosynthetic bacteria and in at least one genus (Paracoccus) of halophilic, denitrifying bacteria. In Rhodopila globiformis (Rhodopseudomonas globiformis), this protein is High-potential iron-sulfur protein (hip).